The following is a 500-amino-acid chain: Glycerol kinase (500 aa).

Thr-13 contributes to the ADP binding site. 3 residues coordinate ATP: Thr-13, Thr-14, and Ser-15. Thr-13 is a sn-glycerol 3-phosphate binding site. Arg-17 is an ADP binding site. Sn-glycerol 3-phosphate-binding residues include Arg-83, Glu-84, Tyr-135, and Asp-244. Glycerol contacts are provided by Arg-83, Glu-84, Tyr-135, Asp-244, and Gln-245. The ADP site is built by Thr-266 and Gly-309. Residues Thr-266, Gly-309, Gln-313, and Gly-410 each coordinate ATP. 2 residues coordinate ADP: Gly-410 and Asn-414.

The protein belongs to the FGGY kinase family.

The enzyme catalyses glycerol + ATP = sn-glycerol 3-phosphate + ADP + H(+). Its pathway is polyol metabolism; glycerol degradation via glycerol kinase pathway; sn-glycerol 3-phosphate from glycerol: step 1/1. Inhibited by fructose 1,6-bisphosphate (FBP). Key enzyme in the regulation of glycerol uptake and metabolism. Catalyzes the phosphorylation of glycerol to yield sn-glycerol 3-phosphate. The protein is Glycerol kinase of Burkholderia ambifaria (strain ATCC BAA-244 / DSM 16087 / CCUG 44356 / LMG 19182 / AMMD) (Burkholderia cepacia (strain AMMD)).